Reading from the N-terminus, the 371-residue chain is UDP-N-acetylglucosamine--N-acetylmuramyl-(pentapeptide) pyrophosphoryl-undecaprenol N-acetylglucosamine transferase (371 aa).

Residues 10–12 (TGG), N122, R166, S196, and Q301 each bind UDP-N-acetyl-alpha-D-glucosamine.

The protein belongs to the glycosyltransferase 28 family. MurG subfamily.

It localises to the cell inner membrane. It carries out the reaction di-trans,octa-cis-undecaprenyl diphospho-N-acetyl-alpha-D-muramoyl-L-alanyl-D-glutamyl-meso-2,6-diaminopimeloyl-D-alanyl-D-alanine + UDP-N-acetyl-alpha-D-glucosamine = di-trans,octa-cis-undecaprenyl diphospho-[N-acetyl-alpha-D-glucosaminyl-(1-&gt;4)]-N-acetyl-alpha-D-muramoyl-L-alanyl-D-glutamyl-meso-2,6-diaminopimeloyl-D-alanyl-D-alanine + UDP + H(+). It participates in cell wall biogenesis; peptidoglycan biosynthesis. In terms of biological role, cell wall formation. Catalyzes the transfer of a GlcNAc subunit on undecaprenyl-pyrophosphoryl-MurNAc-pentapeptide (lipid intermediate I) to form undecaprenyl-pyrophosphoryl-MurNAc-(pentapeptide)GlcNAc (lipid intermediate II). This Halothermothrix orenii (strain H 168 / OCM 544 / DSM 9562) protein is UDP-N-acetylglucosamine--N-acetylmuramyl-(pentapeptide) pyrophosphoryl-undecaprenol N-acetylglucosamine transferase.